Here is a 564-residue protein sequence, read N- to C-terminus: Proline--tRNA ligase (564 aa).

It belongs to the class-II aminoacyl-tRNA synthetase family. ProS type 1 subfamily. In terms of assembly, homodimer.

It is found in the cytoplasm. The catalysed reaction is tRNA(Pro) + L-proline + ATP = L-prolyl-tRNA(Pro) + AMP + diphosphate. Its function is as follows. Catalyzes the attachment of proline to tRNA(Pro) in a two-step reaction: proline is first activated by ATP to form Pro-AMP and then transferred to the acceptor end of tRNA(Pro). As ProRS can inadvertently accommodate and process non-cognate amino acids such as alanine and cysteine, to avoid such errors it has two additional distinct editing activities against alanine. One activity is designated as 'pretransfer' editing and involves the tRNA(Pro)-independent hydrolysis of activated Ala-AMP. The other activity is designated 'posttransfer' editing and involves deacylation of mischarged Ala-tRNA(Pro). The misacylated Cys-tRNA(Pro) is not edited by ProRS. The chain is Proline--tRNA ligase from Xanthomonas campestris pv. campestris (strain 8004).